A 541-amino-acid polypeptide reads, in one-letter code: Chaperonin GroEL (541 aa).

ATP-binding positions include 29 to 32 (TLGP), 86 to 90 (DGTTT), glycine 413, and aspartate 494.

This sequence belongs to the chaperonin (HSP60) family. In terms of assembly, forms a cylinder of 14 subunits composed of two heptameric rings stacked back-to-back. Interacts with the co-chaperonin GroES.

The protein resides in the cytoplasm. It catalyses the reaction ATP + H2O + a folded polypeptide = ADP + phosphate + an unfolded polypeptide.. Its function is as follows. Together with its co-chaperonin GroES, plays an essential role in assisting protein folding. The GroEL-GroES system forms a nano-cage that allows encapsulation of the non-native substrate proteins and provides a physical environment optimized to promote and accelerate protein folding. The protein is Chaperonin GroEL of Acetivibrio thermocellus (strain ATCC 27405 / DSM 1237 / JCM 9322 / NBRC 103400 / NCIMB 10682 / NRRL B-4536 / VPI 7372) (Clostridium thermocellum).